Consider the following 496-residue polypeptide: Transmembrane protein 104 (496 aa).

The Cytoplasmic portion of the chain corresponds to 1 to 10 (MAGEITETGE). A helical membrane pass occupies residues 11-31 (LYSPYVGLVYMFNLIVGTGAL). At 32-36 (TMPKA) the chain is on the extracellular side. The chain crosses the membrane as a helical span at residues 37–57 (FATAGWLVSLVLLVFVGFMSF). Residues 58-146 (VTTTFAMEAM…SMFFNKVGVN (89 aa)) lie on the Cytoplasmic side of the membrane. Residues 81–100 (THKEEDDEDSSTASDSDLLS) are disordered. Residues 91 to 100 (STASDSDLLS) are compositionally biased toward low complexity. A helical membrane pass occupies residues 147 to 167 (LFYFCIITYLYGDLAIYAAAV). The Extracellular segment spans residues 168–204 (PVSLMQVTCSVSGNDSCGVDTDARYNDTDLCWGPLRR). An N-linked (GlcNAc...) asparagine glycan is attached at asparagine 193. Residues 205 to 225 (VDVYRIYLAIFTVLLGPFTFF) traverse the membrane as a helical segment. Residues 226–233 (DVQKTKYL) are Cytoplasmic-facing. A helical membrane pass occupies residues 234-254 (QILTSMMRWIAFAIMIVLALV). Residues 255 to 265 (RIGKGQGEGHP) lie on the Extracellular side of the membrane. Residues 266–286 (PLANFLGVQNLFGVCVYSFMC) form a helical membrane-spanning segment. The Cytoplasmic portion of the chain corresponds to 287–306 (QHSLPSLITPISSKRHITRL). The chain crosses the membrane as a helical span at residues 307–327 (LFLDYALILAFYGLLSFTAIF). Residues 328–354 (CFRGDSLMDMYTLNFARCDVVGLAAVR) lie on the Extracellular side of the membrane. A helical transmembrane segment spans residues 355–375 (FFLGLFPVFTISTNFPIIAVT). The Cytoplasmic segment spans residues 376–397 (LRNNWKTLFHREGGTYPWVVDR). A helical membrane pass occupies residues 398 to 418 (VVFPTITLVPPILVAFCTHDL). The Extracellular portion of the chain corresponds to 419–421 (ESL). A helical membrane pass occupies residues 422–442 (VAITGAYAGTGIQYVIPAFLV). Over 443-470 (YLCRKDTQLTFGYGTVNKHRSPFRHTFW) the chain is Cytoplasmic. The chain crosses the membrane as a helical span at residues 471–491 (VAFVLLWAFSCFFFVTAYIVL). The Extracellular portion of the chain corresponds to 492 to 496 (KETQL).

This sequence belongs to the TMEM104 family.

The protein resides in the membrane. The protein is Transmembrane protein 104 (Tmem104) of Mus musculus (Mouse).